Reading from the N-terminus, the 310-residue chain is Methionyl-tRNA formyltransferase (310 aa).

Residue 108–111 (SLLP) coordinates (6S)-5,6,7,8-tetrahydrofolate.

This sequence belongs to the Fmt family.

The enzyme catalyses L-methionyl-tRNA(fMet) + (6R)-10-formyltetrahydrofolate = N-formyl-L-methionyl-tRNA(fMet) + (6S)-5,6,7,8-tetrahydrofolate + H(+). In terms of biological role, attaches a formyl group to the free amino group of methionyl-tRNA(fMet). The formyl group appears to play a dual role in the initiator identity of N-formylmethionyl-tRNA by promoting its recognition by IF2 and preventing the misappropriation of this tRNA by the elongation apparatus. The polypeptide is Methionyl-tRNA formyltransferase (Fusobacterium nucleatum subsp. nucleatum (strain ATCC 25586 / DSM 15643 / BCRC 10681 / CIP 101130 / JCM 8532 / KCTC 2640 / LMG 13131 / VPI 4355)).